Consider the following 130-residue polypeptide: Ribonuclease VapC22 (130 aa).

The 116-residue stretch at 4 to 119 (VLLDSHVAYW…RLVTKDRRLR (116 aa)) folds into the PINc domain. Mg(2+)-binding residues include D7 and D97.

The protein belongs to the PINc/VapC protein family. It depends on Mg(2+) as a cofactor.

The protein localises to the secreted. In terms of biological role, toxic component of a type II toxin-antitoxin (TA) system. An RNase. Upon expression in M.smegmatis inhibits translation and colony formation. Its toxic effect on colony formation is neutralized by coexpression with cognate antitoxin VapB22; the effect on translation has not been tested but is probably neutralized also. The polypeptide is Ribonuclease VapC22 (Mycobacterium tuberculosis (strain ATCC 25618 / H37Rv)).